Here is a 398-residue protein sequence, read N- to C-terminus: Chalcone synthase (398 aa).

Residue C169 is part of the active site.

This sequence belongs to the thiolase-like superfamily. Chalcone/stilbene synthases family.

It carries out the reaction (E)-4-coumaroyl-CoA + 3 malonyl-CoA + 3 H(+) = 2',4,4',6'-tetrahydroxychalcone + 3 CO2 + 4 CoA. The protein operates within secondary metabolite biosynthesis; flavonoid biosynthesis. Functionally, the primary product of this enzyme is 4,2',4',6'-tetrahydroxychalcone (also termed naringenin-chalcone or chalcone) which can under specific conditions spontaneously isomerize into naringenin. This is Chalcone synthase (CHS) from Petroselinum crispum (Parsley).